Here is a 568-residue protein sequence, read N- to C-terminus: Sphingosine-1-phosphate lyase 1 (568 aa).

Residues 1-40 are Lumenal-facing; the sequence is MPSTDLLMLKAFEPYLEILEVYSTKAKNYVNGHCTKYEPW. Residues 41–61 form a helical; Signal-anchor for type III membrane protein membrane-spanning segment; that stretch reads QLIAWSVVWTLLIVWGYEFVF. Residues 62–568 are Cytoplasmic-facing; it reads QPESLWSRFK…SQMNGSPKPH (507 aa). At K353 the chain carries N6-(pyridoxal phosphate)lysine; alternate. K353 is subject to N6-acetyllysine; alternate. 3'-nitrotyrosine occurs at positions 356 and 366. Residue S564 is modified to Phosphoserine.

It belongs to the group II decarboxylase family. Sphingosine-1-phosphate lyase subfamily. Homodimer. Pyridoxal 5'-phosphate is required as a cofactor. Ubiquitously expressed. Expressed in fetal and adult adrenal gland (at protein level).

Its subcellular location is the endoplasmic reticulum membrane. It carries out the reaction sphinganine 1-phosphate = hexadecanal + phosphoethanolamine. The catalysed reaction is sphing-4-enine 1-phosphate = (2E)-hexadecenal + phosphoethanolamine. It participates in lipid metabolism; sphingolipid metabolism. In terms of biological role, cleaves phosphorylated sphingoid bases (PSBs), such as sphingosine-1-phosphate, into fatty aldehydes and phosphoethanolamine. Elevates stress-induced ceramide production and apoptosis. Required for global lipid homeostasis in liver and cholesterol homeostasis in fibroblasts. Involved in the regulation of pro-inflammatory response and neutrophil trafficking. Modulates neuronal autophagy via phosphoethanolamine production which regulates accumulation of aggregate-prone proteins such as APP. Seems to play a role in establishing neuronal contact sites and axonal maintenance. The polypeptide is Sphingosine-1-phosphate lyase 1 (Homo sapiens (Human)).